Here is a 280-residue protein sequence, read N- to C-terminus: Urease accessory protein UreD (280 aa).

This sequence belongs to the UreD family. UreD, UreF and UreG form a complex that acts as a GTP-hydrolysis-dependent molecular chaperone, activating the urease apoprotein by helping to assemble the nickel containing metallocenter of UreC. The UreE protein probably delivers the nickel.

The protein localises to the cytoplasm. In terms of biological role, required for maturation of urease via the functional incorporation of the urease nickel metallocenter. This is Urease accessory protein UreD from Pseudomonas aeruginosa (strain ATCC 15692 / DSM 22644 / CIP 104116 / JCM 14847 / LMG 12228 / 1C / PRS 101 / PAO1).